Consider the following 316-residue polypeptide: Taste receptor type 2 member 3 (316 aa).

The Extracellular portion of the chain corresponds to 1-6 (MMGLTE). A helical transmembrane segment spans residues 7–27 (GVFLILSGTQFTLGILVNCFI). At 28–42 (ELVNGSSWFKTKRMS) the chain is on the cytoplasmic side. A helical membrane pass occupies residues 43 to 63 (LSDFIITTLALLRIILLCIIL). The Extracellular portion of the chain corresponds to 64–94 (TDSFLIEFSPNTHDSGIIMQIIDVSWTFTNH). Residues 95–115 (LSIWLATCLGVLYCLKIASFS) traverse the membrane as a helical segment. Topologically, residues 116-128 (HPTFLWLKWRVSR) are cytoplasmic. The helical transmembrane segment at 129 to 149 (VMVWMLLGALLLSCGSTASLI) threads the bilayer. Over 150-186 (NEFKLYSVFRGIEATRNVTEHFRKKRSEYYLIHVLGT) the chain is Extracellular. N166 is a glycosylation site (N-linked (GlcNAc...) asparagine). The chain crosses the membrane as a helical span at residues 187–207 (LWYLPPLIVSLASYSLLIFSL). Residues 208 to 234 (GRHTRQMLQNGTSSRDPTTEAHKRAIR) are Cytoplasmic-facing. A helical transmembrane segment spans residues 235–255 (IILSFFFLFLLYFLAFLIASF). At 256–266 (GNFLPKTKMAK) the chain is on the extracellular side. Residues 267-287 (MIGEVMTMFYPAGHSFILILG) form a helical membrane-spanning segment. Over 288 to 316 (NSKLKQTFVVMLRCESGHLKPGSKGPIFS) the chain is Cytoplasmic.

This sequence belongs to the G-protein coupled receptor T2R family. In terms of tissue distribution, expressed in subsets of taste receptor cells of the tongue and palate epithelium and exclusively in gustducin-positive cells. Expressed in the antrum and fundus (part of the stomach), duodenum and in gastric endocrine cells.

It is found in the membrane. In terms of biological role, gustducin-coupled receptor implicated in the perception of bitter compounds in the oral cavity and the gastrointestinal tract. Signals through PLCB2 and the calcium-regulated cation channel TRPM5. The sequence is that of Taste receptor type 2 member 3 (TAS2R3) from Homo sapiens (Human).